A 409-amino-acid polypeptide reads, in one-letter code: Histidine--tRNA ligase (409 aa).

It belongs to the class-II aminoacyl-tRNA synthetase family.

The protein resides in the cytoplasm. It catalyses the reaction tRNA(His) + L-histidine + ATP = L-histidyl-tRNA(His) + AMP + diphosphate + H(+). This chain is Histidine--tRNA ligase, found in Methanosphaerula palustris (strain ATCC BAA-1556 / DSM 19958 / E1-9c).